A 319-amino-acid chain; its full sequence is Acetyl-coenzyme A carboxylase carboxyl transferase subunit alpha (319 aa).

Residues 35–296 (NIDEEVHRLR…KTQLLADLAD (262 aa)) form the CoA carboxyltransferase C-terminal domain.

This sequence belongs to the AccA family. As to quaternary structure, acetyl-CoA carboxylase is a heterohexamer composed of biotin carboxyl carrier protein (AccB), biotin carboxylase (AccC) and two subunits each of ACCase subunit alpha (AccA) and ACCase subunit beta (AccD).

The protein resides in the cytoplasm. It catalyses the reaction N(6)-carboxybiotinyl-L-lysyl-[protein] + acetyl-CoA = N(6)-biotinyl-L-lysyl-[protein] + malonyl-CoA. Its pathway is lipid metabolism; malonyl-CoA biosynthesis; malonyl-CoA from acetyl-CoA: step 1/1. Component of the acetyl coenzyme A carboxylase (ACC) complex. First, biotin carboxylase catalyzes the carboxylation of biotin on its carrier protein (BCCP) and then the CO(2) group is transferred by the carboxyltransferase to acetyl-CoA to form malonyl-CoA. The chain is Acetyl-coenzyme A carboxylase carboxyl transferase subunit alpha from Cronobacter sakazakii (strain ATCC BAA-894) (Enterobacter sakazakii).